Reading from the N-terminus, the 805-residue chain is Ubiquitin carboxyl-terminal hydrolase 5 (805 aa).

One can recognise a Rhodanese domain in the interval 159–283; that stretch reads HGDALLLIDV…WVKLGGAYQS (125 aa). Residues 359–380 are disordered; the sequence is RNSPTVQKFSPHPPTTLSKLNT. Residues 446–804 form the USP domain; the sequence is VGLENIGNCC…SAYVLFYERI (359 aa). Residue Cys-455 is the Nucleophile of the active site. His-761 functions as the Proton acceptor in the catalytic mechanism.

It belongs to the peptidase C19 family.

It carries out the reaction Thiol-dependent hydrolysis of ester, thioester, amide, peptide and isopeptide bonds formed by the C-terminal Gly of ubiquitin (a 76-residue protein attached to proteins as an intracellular targeting signal).. This chain is Ubiquitin carboxyl-terminal hydrolase 5 (UBP5), found in Saccharomyces cerevisiae (strain ATCC 204508 / S288c) (Baker's yeast).